A 113-amino-acid chain; its full sequence is UPF0342 protein SpyM3_0545 (113 aa).

The protein belongs to the UPF0342 family.

The chain is UPF0342 protein SpyM3_0545 from Streptococcus pyogenes serotype M3 (strain ATCC BAA-595 / MGAS315).